Reading from the N-terminus, the 121-residue chain is Perlustrin-like protein (121 aa).

The first 23 residues, 1–23 (MKFGVGFLLSCLVALNTVQNMLA), serve as a signal peptide directing secretion. The IGFBP N-terminal domain occupies 24–104 (LSCLPCDFDT…FDFKGTCQES (81 aa)). Intrachain disulfides connect Cys-26/Cys-52, Cys-29/Cys-54, Cys-36/Cys-55, Cys-45/Cys-58, Cys-66/Cys-79, and Cys-73/Cys-101. Residues Asn-68, Asn-81, and Asn-117 are each glycosylated (N-linked (GlcNAc...) asparagine).

Component of the acid-insoluble organic matrix of calcified layers of the shell (at protein level).

It is found in the secreted. The polypeptide is Perlustrin-like protein (Lottia gigantea (Giant owl limpet)).